The sequence spans 58 residues: Mesomartoxin (58 aa).

Positions 1-29 (MMSRLSVFILIALVLSVIIDVLNNSKVEG) are cleaved as a signal peptide. Intrachain disulfides connect cysteine 31–cysteine 49, cysteine 35–cysteine 54, and cysteine 39–cysteine 56.

The protein belongs to the short scorpion toxin superfamily. Potassium channel inhibitor family. Alpha-KTx 26 subfamily. As to expression, expressed by the venom gland.

It localises to the secreted. Recombinant toxin that reversibly blocks the voltage-gated potassium channels Shaker (IC(50)=0.054 nM), rKv1.2/KCNA2 (IC(50)=15.6 nM), and rKv1.3/KCNA3 (IC(50)=12.5 uM). This Olivierus martensii (Manchurian scorpion) protein is Mesomartoxin.